The chain runs to 659 residues: Pro-secreted protein ORF2 (659 aa).

Positions 1–23 are cleaved as a signal peptide; sequence MRPRPLLLLFLLFLPMLPAPPTG. 2 disordered regions span residues 19 to 43 and 64 to 107; these read APPT…GFWG and PDVA…TAGA. Positions 28-33 match the Nuclear localization signal motif; the sequence is RRRGRR. The segment covering 92 to 107 has biased composition (low complexity); it reads QRPSAASRRRPATAGA. Asn-137 and Asn-310 each carry an N-linked (GlcNAc...) asparagine; by host glycan. The particle formation stretch occupies residues 367 to 393; sequence IALTLLNLADTLLGGLPTELISSAGGQ. An N-linked (GlcNAc...) asparagine; by host glycan is attached at Asn-561. Positions 584–609 are oligomerization; it reads TTRLGAGPVAISAAAVLAPRSALALL.

This sequence belongs to the hepevirus capsid protein family. Homodimer. In terms of assembly, self-assembles to form the capsid. The capsid is dominated by dimers that define the 30 morphological units. Interacts with phosphorylated protein ORF3. Interacts with host TMEM134. Interacts with host ASGR1 and ASGR2; these interactions facilitate infection of host hepatocytes. Cleaved by host protease in the N-terminus. Post-translationally, N-glycosylated. In terms of processing, not N-glycosylated. The C-terminus of the capsid protein ORF2 is truncated in non-enveloped virions shedded in feces, probably due to host proteases.

Its subcellular location is the secreted. It is found in the virion. The protein resides in the host cytoplasm. The protein localises to the host endoplasmic reticulum. It localises to the host Golgi apparatus. Its subcellular location is the host cell surface. It is found in the host nucleus. Plays a role in the inhibition of host antibody-mediated neutralization without blocking viral cell entry. In terms of biological role, forms an icosahedral capsid with a T=1 symmetry and a 34 nm diameter. The capsid is composed of 60 copies linked to each other. Binds to the 5' end of the genomic RNA to mediate genome encapsidation. Binds to heparin surface proteoglycans (HSPGs) to mediate viral entry. Additionally, the interactions with host ASGR1 and ASGR2 facilitate viral infection of hepatocytes. Inhibits IFN production by blocking host TBK1-induced IRF3 phosphorylation. The nuclear form probably modulates host gene expression. The sequence is that of Pro-secreted protein ORF2 from Bandicota bengalensis (lesser bandicoot rat).